The chain runs to 513 residues: DNA damage-binding protein CMR1 (513 aa).

The span at 35–45 (RSEAGIEDHRK) shows a compositional bias: basic and acidic residues. The interval 35–103 (RSEAGIEDHR…TAQNVKQEEE (69 aa)) is disordered. WD repeat units follow at residues 183-224 (IVHE…PDPE), 237-277 (LFSR…SDEL), 329-369 (LSDK…AKPD), 386-425 (NSRL…PSEL), 438-477 (GRWV…LSHL), and 478-513 (ETST…APQE).

This sequence belongs to the WD repeat DDB2/WDR76 family.

Its function is as follows. DNA-binding protein that binds to both single- and double-stranded DNA. Binds preferentially to UV-damaged DNA. May be involved in DNA-metabolic processes. This is DNA damage-binding protein CMR1 from Eremothecium gossypii (strain ATCC 10895 / CBS 109.51 / FGSC 9923 / NRRL Y-1056) (Yeast).